The primary structure comprises 327 residues: Phenylalanine--tRNA ligase alpha subunit (327 aa).

Residue E252 coordinates Mg(2+).

Belongs to the class-II aminoacyl-tRNA synthetase family. Phe-tRNA synthetase alpha subunit type 1 subfamily. In terms of assembly, tetramer of two alpha and two beta subunits. Mg(2+) serves as cofactor.

It localises to the cytoplasm. It carries out the reaction tRNA(Phe) + L-phenylalanine + ATP = L-phenylalanyl-tRNA(Phe) + AMP + diphosphate + H(+). This chain is Phenylalanine--tRNA ligase alpha subunit, found in Aliivibrio fischeri (strain ATCC 700601 / ES114) (Vibrio fischeri).